A 247-amino-acid chain; its full sequence is Coproheme decarboxylase (247 aa).

Residues R129, 143-147 (YPMDK), H170, Q183, and S221 contribute to the Fe-coproporphyrin III site. The active site involves Y143.

It belongs to the ChdC family. Type 1 subfamily. The cofactor is Fe-coproporphyrin III.

The catalysed reaction is Fe-coproporphyrin III + 2 H2O2 + 2 H(+) = heme b + 2 CO2 + 4 H2O. It carries out the reaction Fe-coproporphyrin III + H2O2 + H(+) = harderoheme III + CO2 + 2 H2O. It catalyses the reaction harderoheme III + H2O2 + H(+) = heme b + CO2 + 2 H2O. Its pathway is porphyrin-containing compound metabolism; protoheme biosynthesis. Involved in coproporphyrin-dependent heme b biosynthesis. Catalyzes the decarboxylation of Fe-coproporphyrin III (coproheme) to heme b (protoheme IX), the last step of the pathway. The reaction occurs in a stepwise manner with a three-propionate intermediate. The protein is Coproheme decarboxylase of Bacillus cereus (strain ATCC 10987 / NRS 248).